Reading from the N-terminus, the 874-residue chain is Trimodular acetylaranotin synthesis protein ataIMG (874 aa).

The interval 1-339 (MANLSGLSNR…DSGLLRASSI (339 aa)) is aminotransferase ataI. Residues 20–39 (RFGFQTTQQAKPTESSKTPI) form a disordered region. Residues 23 to 37 (FQTTQQAKPTESSKT) show a composition bias toward polar residues. Residues 340–668 (SYNSMVKGSS…QERTEAEWRT (329 aa)) form an O-methyltransferase ataM region. Aspartate 625 lines the S-adenosyl-L-methionine pocket. The interval 669 to 874 (LAGRTGWEIR…VMEMGPQIGH (206 aa)) is glutathione S-transferase ataG. The GST N-terminal domain maps to 699 to 766 (KPLILAHELE…YLADRFDDGT (68 aa)). The region spanning 739–874 (DPETKAEVIV…VMEMGPQIGH (136 aa)) is the GST C-terminal domain.

In the N-terminal section; belongs to the class-I pyridoxal-phosphate-dependent aminotransferase family. This sequence in the 2nd section; belongs to the class I-like SAM-binding methyltransferase superfamily. Cation-independent O-methyltransferase family. The protein in the C-terminal section; belongs to the GST superfamily. The cofactor is pyridoxal 5'-phosphate.

The enzyme catalyses RX + glutathione = an S-substituted glutathione + a halide anion + H(+). It participates in mycotoxin biosynthesis. In terms of biological role, trimodular acetylaranotin synthesis protein; part of the gene cluster that mediates the biosynthesis of acetylaranotin, a member of the epipolythiodioxopiperazine (ETP) class of toxins characterized by a disulfide-bridged cyclic dipeptide. The first step of acetylaranotin biosynthesis is performed by the NRPS ataP which produces diketopiperazine cyclo-L-Phe-L-Phe via the condensation of 2 phenylalanines (L-Phe). The ataC domain of ataTC then catalyzes the formation of bishydroxylation of cyclo-L-Phe-L-Phe. The glutathione S-transferase domain ataG in ataIMG further catalyzes the conjugation of two glutathiones to the bishydroxylated intermediate. Next, the dipeptidase ataJ removes the Glu residues. The following step is performed by the carbon sulfur lyase domain ataI of ataIMG which may convert the bis-cysteinyl adduct to yield an epidithiol intermediate. The ataT domain from ataTC then catalyzes the oxidation of the free dithiols, followed by a cyclization step catalyzed by the cytochrome P450 ataF. AtaF probably acts as an epoxidase to promote a dual epoxidation formation at C8 and C9 along with C8' and C9', followed by the spontaneous nucleophilic attack of the amide nitrogens N10 and N10' to yield an intermediate with the pyrrolidine partial structure. The final steps of acetylaranotin biosynthesis involve the acetylation and ring rearrangement of an epitetrathiodiketopiperazine intermediate to produce acetylaranotin. AtaH probably catalyzes the acetylation of epitetrathiodiketopiperazine to produce a diacetate and ataY is responsible for the formation of the dihydrooxepin moiety that converts the diacetate intermediate to acetylaranotin via acetylapoaranotin. Both enzymes could function independently in the absence of the other. The acetylaranotin bis-thiomethyltransferase ataS located outside of acetylaranotin gene cluster is the main thiomethyltransferase responsible for converting acetylaranotin and its related intermediates to their methylated forms. The chain is Trimodular acetylaranotin synthesis protein ataIMG from Aspergillus terreus (strain NIH 2624 / FGSC A1156).